The following is a 395-amino-acid chain: MRVKIIVPSLGESITEATIAKWYKKQGDSVKTDELLLEIETEKVTLEVNAPCNGTIGKISKTEGANVAVGEEIGEINEGASANTAGTNNESAKAQAVTQPTSEKPAVANNTLAPSVQKLVTENKLDPNNIKGTGRDGRITKGDVLATINTTTTSAPAISKSNEERVQRVRMSRLRKTIAQRLKDSQNTAAILTTFNEIDMSKVIALRNQYKEEFEKKHAVKLGFMSFFVKATIEALKLIPSVNAEIDGDDLVYKNYYDIGVAVGTEQGLVVPVVRDADKMGFAEVEKTIGILAKQAREGKLSMADLSGGTFSISNGGVYGSLLSTPIINPPQSGILGLHKTEERAVVIDGKIEIRPMMYIALSYDHRIIDGKEGVSFLVKIKQLIENPEKLLLNL.

In terms of domain architecture, Lipoyl-binding spans 2 to 77; that stretch reads RVKIIVPSLG…AVGEEIGEIN (76 aa). Position 43 is an N6-lipoyllysine (Lys43). The Peripheral subunit-binding (PSBD) domain maps to 111 to 148; sequence TLAPSVQKLVTENKLDPNNIKGTGRDGRITKGDVLATI. Active-site residues include His366 and Asp370.

It belongs to the 2-oxoacid dehydrogenase family. As to quaternary structure, forms a 24-polypeptide structural core with octahedral symmetry. Part of the 2-oxoglutarate dehydrogenase (OGDH) complex composed of E1 (2-oxoglutarate dehydrogenase), E2 (dihydrolipoamide succinyltransferase) and E3 (dihydrolipoamide dehydrogenase); the complex contains multiple copies of the three enzymatic components (E1, E2 and E3). Requires (R)-lipoate as cofactor.

The enzyme catalyses N(6)-[(R)-dihydrolipoyl]-L-lysyl-[protein] + succinyl-CoA = N(6)-[(R)-S(8)-succinyldihydrolipoyl]-L-lysyl-[protein] + CoA. Its pathway is amino-acid degradation; L-lysine degradation via saccharopine pathway; glutaryl-CoA from L-lysine: step 6/6. E2 component of the 2-oxoglutarate dehydrogenase (OGDH) complex which catalyzes the second step in the conversion of 2-oxoglutarate to succinyl-CoA and CO(2). This chain is Dihydrolipoyllysine-residue succinyltransferase component of 2-oxoglutarate dehydrogenase complex (sucB), found in Rickettsia conorii (strain ATCC VR-613 / Malish 7).